A 113-amino-acid polypeptide reads, in one-letter code: Pro-FMRFamide-related neuropeptide FF (113 aa).

An N-terminal signal peptide occupies residues 1 to 20 (MDSRQAAALLVLLLLIDGGC). The propeptide occupies 21-65 (AEGPGGQQEDQLSAEEDSEPLPPQDAQTSGSLLHYLLQAMERPGR). Residues 22-48 (EGPGGQQEDQLSAEEDSEPLPPQDAQT) form a disordered region. Phenylalanine amide is present on Phe76. Positions 79–92 (NTQGSWRNEWLSPR) are excised as a propeptide. Residue Phe110 is modified to Phenylalanine amide.

The protein belongs to the FARP (FMRFamide related peptide) family.

The protein localises to the secreted. Its function is as follows. Morphine modulating peptides. Have wide-ranging physiologic effects, including the modulation of morphine-induced analgesia, elevation of arterial blood pressure, and increased somatostatin secretion from the pancreas. Neuropeptide FF potentiates and sensitizes ASIC1 and ASIC3 channels. The chain is Pro-FMRFamide-related neuropeptide FF from Homo sapiens (Human).